The chain runs to 434 residues: V-type ATP synthase beta chain (434 aa).

The protein belongs to the ATPase alpha/beta chains family.

Its function is as follows. Produces ATP from ADP in the presence of a proton gradient across the membrane. The V-type beta chain is a regulatory subunit. The sequence is that of V-type ATP synthase beta chain from Borreliella afzelii (strain PKo) (Borrelia afzelii).